Reading from the N-terminus, the 201-residue chain is Small ribosomal subunit protein uS4 (201 aa).

Positions Leu-26–Tyr-47 are disordered. One can recognise an S4 RNA-binding domain in the interval Ala-92–Ala-154.

The protein belongs to the universal ribosomal protein uS4 family. In terms of assembly, part of the 30S ribosomal subunit. Contacts protein S5. The interaction surface between S4 and S5 is involved in control of translational fidelity.

One of the primary rRNA binding proteins, it binds directly to 16S rRNA where it nucleates assembly of the body of the 30S subunit. In terms of biological role, with S5 and S12 plays an important role in translational accuracy. This chain is Small ribosomal subunit protein uS4, found in Porphyromonas gingivalis (strain ATCC 33277 / DSM 20709 / CIP 103683 / JCM 12257 / NCTC 11834 / 2561).